Reading from the N-terminus, the 247-residue chain is Uridylate kinase (247 aa).

21 to 24 (KVSG) contributes to the ATP binding site. G63 is a UMP binding site. Residues G64 and R68 each contribute to the ATP site. UMP is bound by residues D83 and 144–151 (TGNPFCTT). 4 residues coordinate ATP: T171, Q172, Y177, and D180.

Belongs to the UMP kinase family. As to quaternary structure, homohexamer.

It is found in the cytoplasm. It carries out the reaction UMP + ATP = UDP + ADP. It functions in the pathway pyrimidine metabolism; CTP biosynthesis via de novo pathway; UDP from UMP (UMPK route): step 1/1. Its activity is regulated as follows. Inhibited by UTP. Functionally, catalyzes the reversible phosphorylation of UMP to UDP. This chain is Uridylate kinase, found in Rickettsia rickettsii (strain Sheila Smith).